The following is a 432-amino-acid chain: ATP-dependent RNA helicase RhlB (432 aa).

A Q motif motif is present at residues 9–37 (QNFADLGLQPQVIDGLNAKGFIKCTPIQA). Residues 40–219 (LPVLLAGQDI…FEHMQEPEHV (180 aa)) enclose the Helicase ATP-binding domain. 53–60 (AQTGTGKT) serves as a coordination point for ATP. Residues 165–168 (DEAD) carry the DEAD box motif. The Helicase C-terminal domain occupies 245 to 390 (ALLQTLIEEE…QSDYDASALL (146 aa)). The disordered stretch occupies residues 397 to 432 (LRLQRRPQQNRRNNNGQRQGGNRKHSRPRQPRNTQS). The span at 417-426 (GNRKHSRPRQ) shows a compositional bias: basic residues.

The protein belongs to the DEAD box helicase family. RhlB subfamily. Component of the RNA degradosome, which is a multiprotein complex involved in RNA processing and mRNA degradation.

Its subcellular location is the cytoplasm. It carries out the reaction ATP + H2O = ADP + phosphate + H(+). In terms of biological role, DEAD-box RNA helicase involved in RNA degradation. Has RNA-dependent ATPase activity and unwinds double-stranded RNA. This chain is ATP-dependent RNA helicase RhlB, found in Aliivibrio fischeri (strain MJ11) (Vibrio fischeri).